We begin with the raw amino-acid sequence, 213 residues long: Leucine-rich repeat protein 1 (213 aa).

The N-terminal stretch at 1 to 21 (MGAGALGVVAMVAAAVVVAMA) is a signal peptide. 4 LRR repeats span residues 90–113 (DHLQ…LGNL), 115–137 (NLIS…LGKL), 138–161 (TSLV…LAGI), and 163–186 (SLKV…PFEH).

As to quaternary structure, interacts with HIR1.

The protein resides in the early endosome membrane. It is found in the late endosome membrane. Its subcellular location is the cell membrane. Functionally, involved in plant defense response. This is Leucine-rich repeat protein 1 from Oryza sativa subsp. indica (Rice).